The following is a 174-amino-acid chain: Centrosomal protein 20 (174 aa).

Positions 1–104 (MATVAELKAV…AFEESKDNTI (104 aa)) are necessary and sufficient for homooligomerization and localization to centrosomes and pericentriolar satellites. Residues 49–81 (ENLLINELIREYLEFNKYKYTASVLIAESGQPV) enclose the LisH domain. The interval 129 to 174 (GPSLQPSDPSLGRQPSRRKPMDDHLRKEEQKSTNIEDLHVSQAVNR) is disordered. Serine 144 is subject to Phosphoserine. A compositionally biased stretch (basic and acidic residues) spans 147–167 (KPMDDHLRKEEQKSTNIEDLH).

The protein belongs to the CEP43 family. Homooligomer; probably required for localization to centrosomes. Forms a complex with KIAA0753/OFIP and OFD1; within this complex may stabilize the interaction between OFD1 and KIAA0753/OFIP. Interacts with PCM1; this interaction may be mediated by KIAA0753/OFIP. Interacts with PLK1 in later G1, S, G2 and M phases of the cell cycle; this interaction recruits PLK1 to centrosomes. As to expression, widely expressed. Detected in brain, heart, kidney, liver, lung, skeletal muscle, placenta and intestine.

Its subcellular location is the cytoplasm. It localises to the cytoskeleton. The protein localises to the microtubule organizing center. The protein resides in the centrosome. It is found in the centriole. Its subcellular location is the cell projection. It localises to the cilium. The protein localises to the cilium basal body. The protein resides in the cytoplasmic granule. It is found in the centriolar satellite. Involved in the biogenesis of cilia. Required for the recruitment of PLK1 to centrosomes and S phase progression. The sequence is that of Centrosomal protein 20 from Homo sapiens (Human).